Consider the following 161-residue polypeptide: 2-C-methyl-D-erythritol 2,4-cyclodiphosphate synthase (161 aa).

A divalent metal cation contacts are provided by aspartate 10 and histidine 12. Residues 10 to 12 (DVH) and 36 to 37 (HS) each bind 4-CDP-2-C-methyl-D-erythritol 2-phosphate. Histidine 44 serves as a coordination point for a divalent metal cation. 4-CDP-2-C-methyl-D-erythritol 2-phosphate-binding positions include 58–60 (DIG), 63–67 (FPDTD), 134–137 (TTTE), phenylalanine 141, and arginine 144.

Belongs to the IspF family. As to quaternary structure, homotrimer. Requires a divalent metal cation as cofactor.

The catalysed reaction is 4-CDP-2-C-methyl-D-erythritol 2-phosphate = 2-C-methyl-D-erythritol 2,4-cyclic diphosphate + CMP. Its pathway is isoprenoid biosynthesis; isopentenyl diphosphate biosynthesis via DXP pathway; isopentenyl diphosphate from 1-deoxy-D-xylulose 5-phosphate: step 4/6. Involved in the biosynthesis of isopentenyl diphosphate (IPP) and dimethylallyl diphosphate (DMAPP), two major building blocks of isoprenoid compounds. Catalyzes the conversion of 4-diphosphocytidyl-2-C-methyl-D-erythritol 2-phosphate (CDP-ME2P) to 2-C-methyl-D-erythritol 2,4-cyclodiphosphate (ME-CPP) with a corresponding release of cytidine 5-monophosphate (CMP). This is 2-C-methyl-D-erythritol 2,4-cyclodiphosphate synthase from Shewanella putrefaciens (strain CN-32 / ATCC BAA-453).